The primary structure comprises 388 residues: FMRFamide neuropeptides (388 aa).

Residues 1–21 form the signal peptide; the sequence is MVAPLLVFLFSLQLCHTTSWA. A propeptide spanning residues 22 to 172 is cleaved from the precursor; it reads YVGGNSLNSN…SNHQVIRDSR (151 aa). Residues 40–74 are disordered; that stretch reads FPAGTSNEVPEDAANGQDDNDDSQLTEPNDNNAPL. A compositionally biased stretch (polar residues) spans 64 to 74; that stretch reads LTEPNDNNAPL. Phe179, Phe196, Phe208, Phe219, Phe230, Phe241, Phe253, Phe265, Phe277, Phe289, Phe301, Phe313, Phe325, Phe337, Phe346, Phe359, and Phe372 each carry phenylalanine amide. Residues 360–388 are disordered; that stretch reads GRTPTQSSDFMRFGKSLDKSENKTSDLQK. The span at 374-388 shows a compositional bias: basic and acidic residues; that stretch reads KSLDKSENKTSDLQK. A propeptide spanning residues 375–388 is cleaved from the precursor; it reads SLDKSENKTSDLQK.

This sequence belongs to the FARP (FMRFamide related peptide) family. As to expression, in the brain, expressed in 2 large cells in the lateral neurons in each optic lobe, 2 slightly bigger cells on both sides of the tritocerebrum, around 14 small cells in the dorsal area, around 13 cells in the subesophageal ganglion, and in the central brain.

It localises to the secreted. This chain is FMRFamide neuropeptides, found in Musca domestica (House fly).